The sequence spans 155 residues: Transcriptional repressor NrdR (155 aa).

A zinc finger spans residues 3 to 34; the sequence is CPFCHAEETKVVDSRLVADGAQVRRRRECLEC. In terms of domain architecture, ATP-cone spans 49–139; the sequence is PLIIKRDGRR…VYKRFKDVSD (91 aa).

Belongs to the NrdR family. Requires Zn(2+) as cofactor.

Negatively regulates transcription of bacterial ribonucleotide reductase nrd genes and operons by binding to NrdR-boxes. In Legionella pneumophila (strain Lens), this protein is Transcriptional repressor NrdR.